Here is a 419-residue protein sequence, read N- to C-terminus: G protein-activated inward rectifier potassium channel 4 (419 aa).

Topologically, residues 1–86 (MAGDSRNAMN…LFTTLVDLKW (86 aa)) are cytoplasmic. A Phosphoserine modification is found at Ser5. The helical transmembrane segment at 87 to 111 (RFNLLVFTMVYTITWLFFGFIWWLI) threads the bilayer. Residues 112 to 135 (AYVRGDLDHVGDQEWIPCVENLSG) are Extracellular-facing. An intramembrane region (helical; Pore-forming) is located at residues 136 to 147 (FVSAFLFSIETE). Positions 148–154 (TTIGYGF) form an intramembrane region, pore-forming. The short motif at 149 to 154 (TIGYGF) is the Selectivity filter element. The Extracellular segment spans residues 155 to 163 (RVITEKCPE). Residues 164–185 (GIILLLVQAILGSIVNAFMVGC) traverse the membrane as a helical segment. At 186-419 (MFVKISQPKK…SVSRATRGSM (234 aa)) the chain is on the cytoplasmic side. Residues 380 to 390 (LPSPPLLGGCA) show a composition bias toward low complexity. The disordered stretch occupies residues 380–419 (LPSPPLLGGCAEAEKEAEAEHDEEEEPNGLSVSRATRGSM). Over residues 409–419 (LSVSRATRGSM) the composition is skewed to polar residues.

This sequence belongs to the inward rectifier-type potassium channel (TC 1.A.2.1) family. KCNJ5 subfamily. As to quaternary structure, associates with KCNJ3/GIRK1 or KCNJ6/GRIK2 to form a G-protein-activated heteromultimer pore-forming unit. The resulting inward current is much larger. In terms of tissue distribution, most abundant in heart tissue where it is found predominantly in atria. Also found in brain, kidney, liver, spleen, lung and thymus.

The protein localises to the membrane. The enzyme catalyses K(+)(in) = K(+)(out). Its activity is regulated as follows. Heteromultimer composed of KCNJ3/GIRK1 and KCNJ5/GIRK4 is activated by phosphatidylinositol 4,5 biphosphate (PtdIns(4,5)P2). Functionally, inward rectifier potassium channels are characterized by a greater tendency to allow potassium to flow into the cell rather than out of it. Their voltage dependence is regulated by the concentration of extracellular potassium; as external potassium is raised, the voltage range of the channel opening shifts to more positive voltages. The inward rectification is mainly due to the blockage of outward current by internal magnesium. Can be blocked by external barium. This potassium channel is controlled by G proteins. This chain is G protein-activated inward rectifier potassium channel 4 (Kcnj5), found in Rattus norvegicus (Rat).